The chain runs to 239 residues: NAD-dependent protein deacylase (239 aa).

One can recognise a Deacetylase sirtuin-type domain in the interval 1 to 239 (MNVLILTGAG…PKLLNHFSAM (239 aa)). 8–27 (GAGISAESGIPTFRDANGLW) is a binding site for NAD(+). The substrate site is built by Y52 and R55. NAD(+) is bound at residue 93 to 96 (QNID). H111 serves as the catalytic Proton acceptor. NAD(+) contacts are provided by residues 182-184 (GTS), 207-209 (NLD), and A225.

It belongs to the sirtuin family. Class III subfamily.

Its subcellular location is the cytoplasm. It catalyses the reaction N(6)-acetyl-L-lysyl-[protein] + NAD(+) + H2O = 2''-O-acetyl-ADP-D-ribose + nicotinamide + L-lysyl-[protein]. It carries out the reaction N(6)-succinyl-L-lysyl-[protein] + NAD(+) + H2O = 2''-O-succinyl-ADP-D-ribose + nicotinamide + L-lysyl-[protein]. NAD-dependent lysine deacetylase and desuccinylase that specifically removes acetyl and succinyl groups on target proteins. Modulates the activities of several proteins which are inactive in their acylated form. This chain is NAD-dependent protein deacylase, found in Rhodopirellula baltica (strain DSM 10527 / NCIMB 13988 / SH1).